The primary structure comprises 554 residues: Membrane protein insertase YidC (554 aa).

Helical transmembrane passes span 7–24 (VLWVIFFMSAVMLYDNWQ), 362–382 (VVGNWGWAIVLLTILIKAVFF), 436–456 (LPVVIQIPVFISLYWVLLASV), 475–495 (PFFILPVLMAVSMYVQTSLNP), and 510–530 (PIAFSVMFFFFPAGLVLYYVV).

The protein belongs to the OXA1/ALB3/YidC family. Type 1 subfamily. As to quaternary structure, interacts with the Sec translocase complex via SecD. Specifically interacts with transmembrane segments of nascent integral membrane proteins during membrane integration.

The protein resides in the cell inner membrane. Its function is as follows. Required for the insertion and/or proper folding and/or complex formation of integral membrane proteins into the membrane. Involved in integration of membrane proteins that insert both dependently and independently of the Sec translocase complex, as well as at least some lipoproteins. Aids folding of multispanning membrane proteins. The chain is Membrane protein insertase YidC from Burkholderia vietnamiensis (strain G4 / LMG 22486) (Burkholderia cepacia (strain R1808)).